A 257-amino-acid polypeptide reads, in one-letter code: Hydroxyacylglutathione hydrolase (257 aa).

The Zn(2+) site is built by His54, His56, Asp58, His59, His113, Asp137, and His175.

The protein belongs to the metallo-beta-lactamase superfamily. Glyoxalase II family. As to quaternary structure, monomer. Requires Zn(2+) as cofactor.

It catalyses the reaction an S-(2-hydroxyacyl)glutathione + H2O = a 2-hydroxy carboxylate + glutathione + H(+). The protein operates within secondary metabolite metabolism; methylglyoxal degradation; (R)-lactate from methylglyoxal: step 2/2. In terms of biological role, thiolesterase that catalyzes the hydrolysis of S-D-lactoyl-glutathione to form glutathione and D-lactic acid. This Acaryochloris marina (strain MBIC 11017) protein is Hydroxyacylglutathione hydrolase.